The following is a 703-amino-acid chain: Calpain-8 (703 aa).

Positions 45-344 (LFKDPEFPAC…FSRLEICNLS (300 aa)) constitute a Calpain catalytic domain. Catalysis depends on residues cysteine 105, histidine 262, and asparagine 286. The tract at residues 355–512 (KWNLVLFNGR…VFSEKKAQAL (158 aa)) is domain III. A linker region spans residues 513–531 (EIGDAVPGDPHEPHPRDMD). EF-hand domains are found at residues 531–566 (DGED…LLSK), 575–610 (FNIN…ICKY), 605–640 (LKIC…AGFT), and 670–703 (IRLE…RALV). The tract at residues 532–703 (GEDEHFWSLS…LAEWLCRALV (172 aa)) is domain IV. Residues aspartate 588, aspartate 590, threonine 592, serine 594, glutamate 599, aspartate 618, serine 620, threonine 624, and glutamate 629 each coordinate Ca(2+).

It belongs to the peptidase C2 family. Monomer and homooligomer. Interacts with COPS1/GPS1, COPB1, EYA2, NME2, NME4 and TOMM70. The cofactor is Ca(2+). Post-translationally, undergoes autolytic cleavage between Ala-5 and Ala-6 which gives rise to fragments extending from Ala-6 to the C-terminus, Ala-6 to the EF-hand 2 domain and from Ala-6 to the beginning of domain III. As to expression, predominantly expressed in the stomach. Localizes strictly to the surface mucus cells in the gastric epithelium and the mucus-secreting goblet cells in the duodenum.

The protein resides in the cytoplasm. It is found in the golgi apparatus. It carries out the reaction Broad endopeptidase specificity.. With respect to regulation, the concentration of calcium for half-maximal activity is 0.3 mM. Inhibited by calpastatin and calpeptin. Its function is as follows. Calcium-regulated non-lysosomal thiol-protease. Involved in membrane trafficking in the gastric surface mucus cells (pit cells) and may involve the membrane trafficking of mucus cells via interactions with coat protein. Proteolytically cleaves the beta-subunit of coatomer complex. The sequence is that of Calpain-8 (Capn8) from Mus musculus (Mouse).